A 141-amino-acid chain; its full sequence is Drosulfakinins (141 aa).

The first 33 residues, 1-33 (MGLRSCTHLATLFMTLWALAFCFLVVVPIPAQT), serve as a signal peptide directing secretion. A propeptide spanning residues 34–73 (TSLQNAKDDRRLQELESKIGAESDQPNANLVGPSFSRFGD) is cleaved from the precursor. The segment at 51–72 (KIGAESDQPNANLVGPSFSRFG) is disordered. Phenylalanine 82 carries the post-translational modification Phenylalanine amide. A propeptide spanning residues 86 to 111 (VPLISRPMIPIELDLLMDNDDERTKA) is cleaved from the precursor. The residue at position 117 (tyrosine 117) is a Sulfotyrosine. At phenylalanine 122 the chain carries Phenylalanine amide. The residue at position 134 (tyrosine 134) is a Sulfotyrosine. Phenylalanine 139 carries the post-translational modification Phenylalanine amide.

This sequence belongs to the gastrin/cholecystokinin family.

It is found in the secreted. Its function is as follows. Drosulfakinin-0 (DSK 0) plays diverse biological roles including regulating gut muscle contraction in adults but not in larvae. The protein is Drosulfakinins of Drosophila mauritiana (Fruit fly).